The following is a 93-amino-acid chain: MRNYELMTVFPVEEDLYKPGIDALHSILADFGVQIKSEEPFGDRDLAYEIKKKTKGRYVLFNIEADPAKMIELDKRFKLITQMLTYLFVRLED.

The protein belongs to the bacterial ribosomal protein bS6 family.

Binds together with bS18 to 16S ribosomal RNA. This is Small ribosomal subunit protein bS6 from Treponema denticola (strain ATCC 35405 / DSM 14222 / CIP 103919 / JCM 8153 / KCTC 15104).